The following is a 163-amino-acid chain: Superoxide dismutase [Mn] (163 aa).

4 residues coordinate Mn(2+): histidine 2, histidine 50, aspartate 134, and histidine 138.

The protein belongs to the iron/manganese superoxide dismutase family. Mn(2+) is required as a cofactor.

The enzyme catalyses 2 superoxide + 2 H(+) = H2O2 + O2. Its function is as follows. Destroys superoxide anion radicals which are normally produced within the cells and which are toxic to biological systems. This chain is Superoxide dismutase [Mn] (sodA), found in Mycobacterium scrofulaceum.